The primary structure comprises 137 residues: Mediator of RNA polymerase II transcription subunit 21 (137 aa).

The segment at 37–56 is disordered; sequence PKDTIAPSKADQPPEVDTLP. Residues 87–130 are a coiled coil; sequence GLDNSEQDQLQSIKELEEELNVAEKQRQEAVKEKDEVLVKLDQT.

It belongs to the Mediator complex subunit 21 family. As to quaternary structure, component of the Mediator complex.

The protein resides in the nucleus. Functionally, component of the Mediator complex, a coactivator involved in the regulated transcription of nearly all RNA polymerase II-dependent genes. Mediator functions as a bridge to convey information from gene-specific regulatory proteins to the basal RNA polymerase II transcription machinery. Mediator is recruited to promoters by direct interactions with regulatory proteins and serves as a scaffold for the assembly of a functional preinitiation complex with RNA polymerase II and the general transcription factors. This is Mediator of RNA polymerase II transcription subunit 21 (srb-7) from Neurospora crassa (strain ATCC 24698 / 74-OR23-1A / CBS 708.71 / DSM 1257 / FGSC 987).